The sequence spans 469 residues: Solute carrier family 52, riboflavin transporter, member 3 (469 aa).

At 1–2 (MA) the chain is on the cytoplasmic side. A helical transmembrane segment spans residues 3–23 (FLMHLLVCVFGMGSWVTINGL). The Extracellular segment spans residues 24–43 (WVELPLLVMELPEGWYLPSY). The helical transmembrane segment at 44-64 (LTVVIQLANIGPLLVTLLHHF) threads the bilayer. Over 65-71 (RPSCLSE) the chain is Cytoplasmic. A helical membrane pass occupies residues 72–92 (VPIIFTLLGVGTVTCIIFAFL). Topologically, residues 93 to 97 (WNMTS) are extracellular. N-linked (GlcNAc...) asparagine glycosylation occurs at Asn94. The helical transmembrane segment at 98–118 (WVLDGHHSIAFLVLTFFLALV) threads the bilayer. Residues 119 to 137 (DCTSSVTFLPFMSRLPTYY) are Cytoplasmic-facing. A helical transmembrane segment spans residues 138–158 (LTTFFVGEGLSGLLPALVALA). At 159–220 (QGSGLTTCVN…SRYLPAHFSP (62 aa)) the chain is on the extracellular side. Residue Asn168 is glycosylated (N-linked (GlcNAc...) asparagine). Residues 221 to 241 (LVFFLLLSIMMACCLVAFFVL) form a helical membrane-spanning segment. The Cytoplasmic segment spans residues 242 to 292 (QRQPRCWEASVEDLLNDQVTLHSIRPREENDLGPAGTVDSSQGQGYLEEKA). Position 251 is a phosphoserine (Ser251). The helical transmembrane segment at 293-313 (APCCPAHLAFIYTLVAFVNAL) threads the bilayer. At 314–335 (TNGMLPSVQTYSCLSYGPVAYH) the chain is on the extracellular side. The chain crosses the membrane as a helical span at residues 336–356 (LAATLSIVANPLASLVSMFLP). Topologically, residues 357–359 (NRS) are cytoplasmic. A helical membrane pass occupies residues 360–380 (LLFLGVLSVLGTCFGGYNMAM). Over 381–396 (AVMSPCPLLQGHWGGE) the chain is Extracellular. Cys386 and Cys463 form a disulfide bridge. Residues 397 to 417 (VLIVASWVLFSGCLSYVKVML) form a helical membrane-spanning segment. The Cytoplasmic portion of the chain corresponds to 418–427 (GVVLRDLSRS). A helical membrane pass occupies residues 428 to 448 (ALLWCGAAVQLGSLLGALLMF). The Extracellular segment spans residues 449–469 (PLVNVLRLFSSADFCNLHCPA).

Belongs to the riboflavin transporter family. As to expression, predominantly expressed in testis. Highly expressed in small intestine and prostate.

The protein localises to the apical cell membrane. Its subcellular location is the cell membrane. The protein resides in the nucleus membrane. It is found in the cytoplasm. The catalysed reaction is riboflavin(in) = riboflavin(out). Its activity is regulated as follows. Activity is strongly inhibited by riboflavin analogs, such as lumiflavin, flavin mononucleotide (FMN), flavin adenine dinucleotide (FAD), by methylene blue, and to a lesser extent by amiloride. Riboflavin transport is Na(+)-independent at low pH but significantly reduced by Na(+) depletion under neutral pH conditions. Functionally, plasma membrane transporter mediating the uptake by cells of the water soluble vitamin B2/riboflavin that plays a key role in biochemical oxidation-reduction reactions of the carbohydrate, lipid, and amino acid metabolism. Humans are unable to synthesize vitamin B2/riboflavin and must obtain it via intestinal absorption. This Homo sapiens (Human) protein is Solute carrier family 52, riboflavin transporter, member 3 (SLC52A3).